The sequence spans 217 residues: UPF0502 protein KPN78578_10500 (217 aa).

Belongs to the UPF0502 family.

This Klebsiella pneumoniae subsp. pneumoniae (strain ATCC 700721 / MGH 78578) protein is UPF0502 protein KPN78578_10500.